The following is a 445-amino-acid chain: Phosphoglucosamine mutase (445 aa).

Serine 102 (phosphoserine intermediate) is an active-site residue. The Mg(2+) site is built by serine 102, aspartate 241, aspartate 243, and aspartate 245. Serine 102 is subject to Phosphoserine.

It belongs to the phosphohexose mutase family. Mg(2+) serves as cofactor. Post-translationally, activated by phosphorylation.

It carries out the reaction alpha-D-glucosamine 1-phosphate = D-glucosamine 6-phosphate. Functionally, catalyzes the conversion of glucosamine-6-phosphate to glucosamine-1-phosphate. This is Phosphoglucosamine mutase from Shewanella sp. (strain ANA-3).